Consider the following 259-residue polypeptide: Chymotrypsin-1 (259 aa).

A signal peptide spans 1-17 (MLRKVFAVVSVLLVVSA). The propeptide at 18–32 (AKVTKLVLDDNYVNR) is activation peptide. The 223-residue stretch at 33–255 (VVGGEVAKNG…YHDWVRTTMA (223 aa)) folds into the Peptidase S1 domain. C59 and C75 are disulfide-bonded. Residues H74 and D119 each act as charge relay system in the active site. 2 disulfide bridges follow: C182–C198 and C208–C232. S212 (charge relay system) is an active-site residue.

It belongs to the peptidase S1 family. In terms of tissue distribution, after blood feeding, expression is induced in the midgut epithelium, followed by secretion into the midgut lumen.

Its subcellular location is the secreted. The enzyme catalyses Preferential cleavage: Tyr-|-Xaa, Trp-|-Xaa, Phe-|-Xaa, Leu-|-Xaa.. The sequence is that of Chymotrypsin-1 (CHYM1) from Anopheles gambiae (African malaria mosquito).